Consider the following 130-residue polypeptide: Astrocytic phosphoprotein PEA-15 (130 aa).

In terms of domain architecture, DED spans 3–81 (EYGTLLQDLT…RPDLLTMVVD (79 aa)). Phosphoserine occurs at positions 61 and 90. The microtubule-binding stretch occupies residues 98–107 (KLTRIPSAKK). S104 carries the post-translational modification Phosphoserine; by PKC. S116 bears the Phosphoserine; by CaMK2 mark. The microtubule-binding stretch occupies residues 122-129 (KLAPPPKK).

In terms of assembly, binds RPS6KA3, MAPK3 and MAPK1. Interacts with CASP8 and FADD. Transient interaction with PLD1 and PLD2. Phosphorylated by protein kinase C and calcium-calmodulin-dependent protein kinase. These phosphorylation events are modulated by neurotransmitters or hormones. Predominantly expressed in the brain. Low levels in some peripheral organs.

Its subcellular location is the cytoplasm. Its function is as follows. Blocks Ras-mediated inhibition of integrin activation and modulates the ERK MAP kinase cascade. Inhibits RPS6KA3 activities by retaining it in the cytoplasm. Inhibits both TNFRSF6- and TNFRSF1A-mediated CASP8 activity and apoptosis. Regulates glucose transport by controlling both the content of SLC2A1 glucose transporters on the plasma membrane and the insulin-dependent trafficking of SLC2A4 from the cell interior to the surface. The chain is Astrocytic phosphoprotein PEA-15 (Pea15) from Mus musculus (Mouse).